Reading from the N-terminus, the 394-residue chain is MAFYSAGPLSPGYNSTSAWGGNDNAEEDPWAAPGSSSSAAPPTTSSGFAPSPPGGFASFSTQQQQQQQQQQQRQQAGYFGGAPAAGASLAQEADAYQDGLMETSFGVGSGAGQNRLGGAAATVNPQSPHNAHSSSSTYGSAISSTHSQPSTQSQQPQSHALPSSAAQAQAARAGAFPSGVSTSQYQPTSQGAQGASRFQSHTPSTLLPSEPAGFTSHTSSDYSATAPRQLAPGYPLPASNYTVPAYSPFARVDSLSTPRRETVEDMYGVPENFLEVEVRSPLTHGVGRKMYTDYEIVTRTNIPAFKLRYSSVRRRYSDFEYFRDILERESTRVNIPPLPGKVFTNRFTDEVIEARREGLERFLQVVAGHPLLQTGSKVMAAFLQDSGWSKDQWL.

Disordered regions lie at residues Met-1–Ala-82 and Leu-116–Ala-226. Low complexity-rich tracts occupy residues Ala-31 to Ala-82 and Ala-131 to Ser-178. Positions Gly-179–Leu-207 are enriched in polar residues. In terms of domain architecture, PX spans Asn-272–Ser-389. A 1,2-diacyl-sn-glycero-3-phospho-(1D-myo-inositol-3-phosphate)-binding residues include Arg-315, Ser-317, Lys-341, Arg-346, and Arg-355.

The protein belongs to the sorting nexin family.

The protein localises to the cytoplasm. It localises to the golgi apparatus membrane. Its subcellular location is the prevacuolar compartment membrane. Its function is as follows. Required for retention of late Golgi membrane proteins. Component of the retrieval machinery that functions by direct interaction with the cytosolic tails of certain TGN membrane proteins during the sorting/budding process at the prevacuolar compartment. Binds phosphatidylinositol 3-phosphate (PtdIns(P3)). In Mycosarcoma maydis (Corn smut fungus), this protein is Sorting nexin-3 (SNX3).